Reading from the N-terminus, the 240-residue chain is Protein OPG176 (240 aa).

The protein belongs to the orthopoxvirus OPG176 family. In terms of assembly, tetramer. Interacts with host MYD88, TRF4, TICAM2 and MAL.

BCL2-like protein which disrupts the host immune response by inhibiting the TLR4 signaling pathway leading to NF-kappa-B activation. Acts close to the plasma membrane and targets several host TIR-domain containing adapter proteins including MYD88, TIRAP, TRIF and TICAM2. In turn, blocks the host NF-kappa-B and TRIF-mediated IRF3 activation. In Cynomys gunnisoni (Gunnison's prairie dog), this protein is Protein OPG176 (OPG176).